Reading from the N-terminus, the 232-residue chain is Putative N-acetylmannosamine-6-phosphate 2-epimerase (232 aa).

Belongs to the NanE family.

The catalysed reaction is an N-acyl-D-glucosamine 6-phosphate = an N-acyl-D-mannosamine 6-phosphate. It functions in the pathway amino-sugar metabolism; N-acetylneuraminate degradation; D-fructose 6-phosphate from N-acetylneuraminate: step 3/5. Functionally, converts N-acetylmannosamine-6-phosphate (ManNAc-6-P) to N-acetylglucosamine-6-phosphate (GlcNAc-6-P). The polypeptide is Putative N-acetylmannosamine-6-phosphate 2-epimerase (Borreliella afzelii (strain PKo) (Borrelia afzelii)).